The sequence spans 430 residues: Glutamine synthetase leaf isozyme, chloroplastic (430 aa).

The transit peptide at 1–49 (MAQILAPSTQWQMRITKTSPCATPITSKMWSSLVMKQTKKVAHSAKFRV) directs the protein to the chloroplast. Residues 77–157 (IIAEYIWIGG…VVCDAYTPAG (81 aa)) enclose the GS beta-grasp domain. Residues 99-119 (SKPVSHPSEVPKWNYDGSSTG) are disordered. One can recognise a GS catalytic domain in the interval 161–430 (PTNKRHRAAE…LAAQKIALKV (270 aa)).

Belongs to the glutamine synthetase family. As to quaternary structure, homooctamer.

It localises to the plastid. Its subcellular location is the chloroplast. It catalyses the reaction L-glutamate + NH4(+) + ATP = L-glutamine + ADP + phosphate + H(+). Its function is as follows. The light-modulated chloroplast enzyme, encoded by a nuclear gene and expressed primarily in leaves, is responsible for the reassimilation of the ammonia generated by photorespiration. The protein is Glutamine synthetase leaf isozyme, chloroplastic (GS2) of Pisum sativum (Garden pea).